The following is a 778-amino-acid chain: Arf-GAP with coiled-coil, ANK repeat and PH domain-containing protein 2 (778 aa).

The 226-residue stretch at 1-226 (MKMTVDFEEC…MKDLGAQLDR (226 aa)) folds into the BAR domain. Residues 266-361 (GIVMEGYLFK…WIKAVQTSIA (96 aa)) enclose the PH domain. A disordered region spans residues 371 to 391 (SEKLDKKSSPSTGSLDSGNES). Residues 379-388 (SPSTGSLDSG) are compositionally biased toward polar residues. Residues serine 384 and serine 387 each carry the phosphoserine modification. In terms of domain architecture, Arf-GAP spans 399–520 (ESALQRVQCI…KFVDKYSISL (122 aa)). Residues 414-437 (CCDCGLADPRWASINLGITLCIEC) form a C4-type zinc finger. At serine 521 the chain carries Phosphoserine. The interval 540 to 599 (SISKFGPGDQVRASAQSSVRSNDSGIQQSSDDGRESLPSTVSANSLYEPEGERQDSSMFL) is disordered. A compositionally biased stretch (polar residues) spans 552–569 (ASAQSSVRSNDSGIQQSS). A phosphoserine mark is found at serine 581 and serine 584. ANK repeat units follow at residues 640–669 (NKAT…NVNQ), 673–702 (QGRG…NQHA), and 706–735 (EGKD…NEEM). Tyrosine 742 carries the phosphotyrosine modification. Phosphoserine is present on serine 775.

In terms of assembly, interacts (via KANK domains) with RAB35 (GTP-bound form); the interaction is direct and probably recruits ACAP2 to membranes including plasma membrane. Interacts with MICALL1; the interaction is indirect through RAB35. As to expression, widely expressed. Highest level in lung.

The protein localises to the cell membrane. It is found in the endosome membrane. Its activity is regulated as follows. GAP activity stimulated by phosphatidylinositol 4,5-bisphosphate (PIP2) and phosphatidic acid. Its function is as follows. GTPase-activating protein (GAP) for ADP ribosylation factor 6 (ARF6). Doesn't show GAP activity for RAB35. This chain is Arf-GAP with coiled-coil, ANK repeat and PH domain-containing protein 2 (ACAP2), found in Homo sapiens (Human).